The chain runs to 738 residues: Catalase-peroxidase (738 aa).

Residues 1 to 24 are disordered; it reads MSEEHPPIAEANSQPSNGCPVAGG. A cross-link (tryptophyl-tyrosyl-methioninium (Trp-Tyr) (with M-257)) is located at residues 108 to 231; it reads WHAAGTYRVG…LAAVQMGLIY (124 aa). Residue histidine 109 is the Proton acceptor of the active site. Positions 231 to 257 form a cross-link, tryptophyl-tyrosyl-methioninium (Tyr-Met) (with W-108); that stretch reads YVNPEGPNGNPDPLAAAIDIRETFGRM. Residue histidine 272 participates in heme b binding.

The protein belongs to the peroxidase family. Peroxidase/catalase subfamily. Homodimer or homotetramer. It depends on heme b as a cofactor. In terms of processing, formation of the three residue Trp-Tyr-Met cross-link is important for the catalase, but not the peroxidase activity of the enzyme.

It catalyses the reaction H2O2 + AH2 = A + 2 H2O. The catalysed reaction is 2 H2O2 = O2 + 2 H2O. Its function is as follows. Bifunctional enzyme with both catalase and broad-spectrum peroxidase activity. The sequence is that of Catalase-peroxidase from Mycobacteroides abscessus (strain ATCC 19977 / DSM 44196 / CCUG 20993 / CIP 104536 / JCM 13569 / NCTC 13031 / TMC 1543 / L948) (Mycobacterium abscessus).